Consider the following 338-residue polypeptide: 4-hydroxythreonine-4-phosphate dehydrogenase (338 aa).

Residues histidine 139 and threonine 140 each coordinate substrate. Positions 169, 214, and 270 each coordinate a divalent metal cation. Substrate is bound by residues lysine 278, asparagine 287, and arginine 296.

This sequence belongs to the PdxA family. In terms of assembly, homodimer. The cofactor is Zn(2+). Mg(2+) is required as a cofactor. Requires Co(2+) as cofactor.

It localises to the cytoplasm. The catalysed reaction is 4-(phosphooxy)-L-threonine + NAD(+) = 3-amino-2-oxopropyl phosphate + CO2 + NADH. It participates in cofactor biosynthesis; pyridoxine 5'-phosphate biosynthesis; pyridoxine 5'-phosphate from D-erythrose 4-phosphate: step 4/5. In terms of biological role, catalyzes the NAD(P)-dependent oxidation of 4-(phosphooxy)-L-threonine (HTP) into 2-amino-3-oxo-4-(phosphooxy)butyric acid which spontaneously decarboxylates to form 3-amino-2-oxopropyl phosphate (AHAP). The chain is 4-hydroxythreonine-4-phosphate dehydrogenase from Desulfosudis oleivorans (strain DSM 6200 / JCM 39069 / Hxd3) (Desulfococcus oleovorans).